The primary structure comprises 470 residues: Nucleoporin NUP49 (470 aa).

Residues 1–13 (MSLFGTNTTSQTP) are compositionally biased toward polar residues. The disordered stretch occupies residues 1–92 (MSLFGTNTTS…STTTTTSQPQ (92 aa)). 12 GLFG repeats span residues 17-20 (GLFG), 45-48 (GLFG), 63-66 (GLFG), 79-82 (GLFG), 96-99 (GLFG), 111-114 (GLFG), 127-130 (GLFG), 142-145 (GLFG), 156-159 (GLFG), 168-171 (GLFG), 181-184 (GLFG), and 193-197 (GLFGQ). Positions 20-31 (GTTTSQSAQTGS) are enriched in low complexity. Positions 32–74 (LFGTATSQPQQTGGLFGSTATQTPSSQLQSTGLFGSTTATSQP) are enriched in polar residues. Positions 75 to 92 (QQTGGLFGSTTTTTSQPQ) are enriched in low complexity. The tract at residues 196 to 221 (GQSTTQPQQQQNATPGLTMGQSTNTQ) is disordered. A compositionally biased stretch (low complexity) spans 197–206 (QSTTQPQQQQ). Residues 207 to 221 (NATPGLTMGQSTNTQ) show a composition bias toward polar residues. 2 coiled-coil regions span residues 239–270 (TRFNDLTEALQQEIAKIDEEIQKCIRDKEAVD) and 375–401 (FSKTADEMEEMMKKFEKTITEIEAHLT).

This sequence belongs to the nucleoporin GLFG family. As to quaternary structure, component of the nuclear pore complex (NPC). NPC constitutes the exclusive means of nucleocytoplasmic transport. NPCs allow the passive diffusion of ions and small molecules and the active, nuclear transport receptor-mediated bidirectional transport of macromolecules such as proteins, RNAs, ribonucleoparticles (RNPs), and ribosomal subunits across the nuclear envelope. Due to its 8-fold rotational symmetry, all subunits are present with 8 copies or multiples thereof.

It localises to the nucleus. Its subcellular location is the nuclear pore complex. The protein resides in the nucleus membrane. Functionally, functions as a component of the nuclear pore complex (NPC). NPC components, collectively referred to as nucleoporins (NUPs), can play the role of both NPC structural components and of docking or interaction partners for transiently associated nuclear transport factors. Active directional transport is assured by both, a Phe-Gly (FG) repeat affinity gradient for these transport factors across the NPC and a transport cofactor concentration gradient across the nuclear envelope (GSP1 and GSP2 GTPases associated predominantly with GTP in the nucleus, with GDP in the cytoplasm). NUP49 plays an important role in several nuclear transport pathways including poly(A)+ RNA, tRNA, and pre-ribosome transport. This Chaetomium thermophilum (strain DSM 1495 / CBS 144.50 / IMI 039719) (Thermochaetoides thermophila) protein is Nucleoporin NUP49 (NUP49).